The following is a 164-amino-acid chain: R-phycoerythrin alpha chain (164 aa).

(2R,3E)-phycoerythrobilin-binding residues include Asn-47, Lys-81, Cys-82, Arg-84, His-88, Arg-137, Cys-139, and Arg-142.

Belongs to the phycobiliprotein family. In terms of assembly, heterododecamer of 6 alpha and 6 beta chains. The basic functional unit of phycobiliproteins is a ring-shaped hexamer formed from two back-to-back trimers contacting via the alpha chain subunits. The trimers are composed of alpha/beta subunit heterodimers arranged around a three-fold axis of symmetry. The phycoerythrins also contain a gamma subunit which is located in the center of the hexamer. Contains two covalently linked phycoerythrobilin chromophores. In PubMed:8876649 the authors refer to the bilins as phycoerythrobilins. In the PDB entries, the bilins are named as phycocyanobilins although the modeled compounds correspond to phycoerythrobilins.

The protein localises to the plastid. It localises to the chloroplast thylakoid membrane. Light-harvesting photosynthetic tetrapyrrole chromophore-protein from the phycobiliprotein complex. The sequence is that of R-phycoerythrin alpha chain (cpeA) from Polysiphonia urceolata (Red alga).